We begin with the raw amino-acid sequence, 268 residues long: Putative type I specificity subunit S.MpnORF365P (268 aa).

The protein belongs to the type-I restriction system S methylase family. The methyltransferase is composed of M and S polypeptides.

In terms of biological role, the specificity (S) subunit of a type I methyltransferase (MTase); this subunit dictates DNA sequence specificity. The single R subunit has multiple frameshifts and is probably not expressed. This chain is Putative type I specificity subunit S.MpnORF365P, found in Mycoplasma pneumoniae (strain ATCC 29342 / M129 / Subtype 1) (Mycoplasmoides pneumoniae).